Consider the following 486-residue polypeptide: Receptor-interacting serine/threonine-protein kinase 3 (486 aa).

At Ser2 the chain carries Phosphoserine. Positions 22 to 292 constitute a Protein kinase domain; that stretch reads LKKLEFVGKG…DCEPKTNEVY (271 aa). Residues 28 to 36 and Lys51 contribute to the ATP site; that span reads VGKGGFGVV. Residue Asp143 is the Proton acceptor of the active site. Ser165 is modified (phosphoserine). Thr187 is subject to Phosphothreonine. Ser204 carries the post-translational modification Phosphoserine; by autocatalysis. The residue at position 231 (Thr231) is a Phosphothreonine; by autocatalysis. Ser232 bears the Phosphoserine; by autocatalysis mark. Residue Thr257 is modified to Phosphothreonine. Residues Ser304 and Ser326 each carry the phosphoserine modification. A disordered region spans residues 312–333; the sequence is QHRSSGRNLSAREPSQRGTEMD. Residue Thr338 is modified to Phosphothreonine. Residues 349–388 are disordered; that stretch reads LEEPSGPVPGKCPERQAQDTSVGPATPARTSSDPVAGTPQ. Phosphoserine occurs at positions 353, 369, and 380. Residues 366–381 are compositionally biased toward polar residues; that stretch reads QDTSVGPATPARTSSD. Position 392 is a phosphothreonine (Thr392). The RIP homotypic interaction motif (RHIM) signature appears at 440 to 461; sequence LVFNNCSEVQIGNYNSLVAPPR. The disordered stretch occupies residues 462–486; it reads TTASSSAKYDQAQFGRGRGWQPFHK. Arg477 is modified (omega-N-methylarginine).

This sequence belongs to the protein kinase superfamily. TKL Ser/Thr protein kinase family. Interacts (via RIP homotypic interaction motif) with RIPK1 (via RIP homotypic interaction motif); this interaction induces RIPK1 phosphorylation and formation of a RIPK1-RIPK3 necrosis-inducing complex. Interacts with MLKL; the interaction is direct and triggers necroptosis. Interacts with ZBP1 (via RIP homotypic interaction motif); interaction with ZBP1 activates RIPK3, triggering necroptosis. Upon TNF-induced necrosis, the RIPK1-RIPK3 dimer further interacts with PGAM5 and MLKL; the formation of this complex leads to PGAM5 phosphorylation and increase in PGAM5 phosphatase activity. Binds TRAF2 and is recruited to the TNFR-1 signaling complex. Interacts with PYGL, GLUL and GLUD1; these interactions result in activation of these metabolic enzymes. Interacts with BIRC2/c-IAP1, BIRC3/c-IAP2 and XIAP/BIRC4. Interacts with ARHGEF2. Interacts with PELI1 (via atypical FHA domain); the phosphorylated form at Thr-187 binds preferentially to PELI1. Interacts with BUB1B, TRAF2 and STUB1. Interacts with CASP6. Component of the AIM2 PANoptosome complex, a multiprotein complex that drives inflammatory cell death (PANoptosis). In terms of assembly, (Microbial infection) Interacts (via RIP homotypic interaction motif) with murid herpesvirus protein RIR1; this interaction disrupts RIP3-RIP1 interactions characteristic of TNF-alpha induced necroptosis, thereby suppressing this death pathway. RIPK1 and RIPK3 undergo reciprocal auto- and trans-phosphorylation. Autophosphorylated following interaction with ZBP1. Phosphorylation of Ser-204 plays a role in the necroptotic function of RIPK3. Autophosphorylates at Thr-231 and Ser-232 following activation by ZBP1: phosphorylation at these sites is a hallmark of necroptosis and is required for binding MLKL. Phosphorylation at Thr-187 is important for its kinase activity, interaction with PELI1 and for its ability to mediate TNF-induced necroptosis. Post-translationally, polyubiquitinated with 'Lys-48' and 'Lys-63'-linked chains by BIRC2/c-IAP1 and BIRC3/c-IAP2, leading to activation of NF-kappa-B. Ubiquitinated by STUB1 leading to its subsequent proteasome-dependent degradation. As to expression, expressed in embryo and in adult spleen, liver, testis, heart, brain and lung.

The protein localises to the cytoplasm. Its subcellular location is the cytosol. The protein resides in the nucleus. It carries out the reaction L-seryl-[protein] + ATP = O-phospho-L-seryl-[protein] + ADP + H(+). The enzyme catalyses L-threonyl-[protein] + ATP = O-phospho-L-threonyl-[protein] + ADP + H(+). With respect to regulation, activity is stimulated by ZBP1, which senses double-stranded Z-RNA structures. RIPK3-dependent necroptosis is inhibited by RIPK1: RIPK1 prevents the ZBP1-induced activation of RIPK3 via FADD-mediated recruitment of CASP8, which cleaves RIPK1 and limits TNF-induced necroptosis. Inhibited by type II inhibitor 1-(4-fluorophenyl)-N-[3-fluoro-4-(1H-pyrrolo[2,3-b]pyridin-4-yloxy)phenyl]-2-oxo-1,2-dihydropyridine-3-carboxamide. In terms of biological role, serine/threonine-protein kinase that activates necroptosis and apoptosis, two parallel forms of cell death. Necroptosis, a programmed cell death process in response to death-inducing TNF-alpha family members, is triggered by RIPK3 following activation by ZBP1. Activated RIPK3 forms a necrosis-inducing complex and mediates phosphorylation of MLKL, promoting MLKL localization to the plasma membrane and execution of programmed necrosis characterized by calcium influx and plasma membrane damage. In addition to TNF-induced necroptosis, necroptosis can also take place in the nucleus in response to orthomyxoviruses infection: following ZBP1 activation, which senses double-stranded Z-RNA structures, nuclear RIPK3 catalyzes phosphorylation and activation of MLKL, promoting disruption of the nuclear envelope and leakage of cellular DNA into the cytosol. Also regulates apoptosis: apoptosis depends on RIPK1, FADD and CASP8, and is independent of MLKL and RIPK3 kinase activity. Phosphorylates RIPK1: RIPK1 and RIPK3 undergo reciprocal auto- and trans-phosphorylation. In some cell types, also able to restrict viral replication by promoting cell death-independent responses. In response to flavivirus infection in neurons, promotes a cell death-independent pathway that restricts viral replication: together with ZBP1, promotes a death-independent transcriptional program that modifies the cellular metabolism via up-regulation expression of the enzyme ACOD1/IRG1 and production of the metabolite itaconate. Itaconate inhibits the activity of succinate dehydrogenase, generating a metabolic state in neurons that suppresses replication of viral genomes. RIPK3 binds to and enhances the activity of three metabolic enzymes: GLUL, GLUD1, and PYGL. These metabolic enzymes may eventually stimulate the tricarboxylic acid cycle and oxidative phosphorylation, which could result in enhanced ROS production. The sequence is that of Receptor-interacting serine/threonine-protein kinase 3 from Mus musculus (Mouse).